Here is a 329-residue protein sequence, read N- to C-terminus: MSIFLKNKQFENITSQEQTKNNYKQLINDIQTLKKDLNAIILAHYYQEPDIQDVADFLGDSLGLAREAAKTNADIIVFAGVHFMAETAKILNPEKMVLLPDLNAGCSLADSCPPEIFSEFKKAHSDHLVISYINCSASIKAMSDIICTSANAVDIVNKIPLTQPILFAPDQNLGRYVISKTGRDLLLWPGSCIVHETFSEKKIFEFQSLYPTAEVIAHPECEPTILKHANYIGSTTSLLQYVKNSKKTTFIVITEPGIIHQMKKSCPEKQFLALPTVSGCACNECPHMRLNTLEKLYLAMKTRSPQIEIPESILLNAKKPIERMLEMSN.

The iminosuccinate site is built by H44 and S61. C106 contacts [4Fe-4S] cluster. Residues 132-134 (YIN) and S149 contribute to the iminosuccinate site. C192 serves as a coordination point for [4Fe-4S] cluster. Iminosuccinate is bound by residues 218–220 (HPE) and T235. C285 contacts [4Fe-4S] cluster.

Belongs to the quinolinate synthase family. Type 2 subfamily. The cofactor is [4Fe-4S] cluster.

It is found in the plastid. Its subcellular location is the cyanelle. It catalyses the reaction iminosuccinate + dihydroxyacetone phosphate = quinolinate + phosphate + 2 H2O + H(+). It participates in cofactor biosynthesis; NAD(+) biosynthesis; quinolinate from iminoaspartate: step 1/1. Catalyzes the condensation of iminoaspartate with dihydroxyacetone phosphate to form quinolinate. This is Quinolinate synthase from Cyanophora paradoxa.